Reading from the N-terminus, the 73-residue chain is Gastricsin (73 aa).

A propeptide spans 1–43 (activation peptide); the sequence is SVIKVPLKKLKSIRQAMKEKGLLEEFLKTHKYDPAQRYRIGDI. The Peptidase A1 domain occupies 57-73; that stretch reads YFGEISIGTPPQNFLVL.

The protein belongs to the peptidase A1 family.

It is found in the secreted. It carries out the reaction More restricted specificity than pepsin A, but shows preferential cleavage at Tyr-|-Xaa bonds. High activity on hemoglobin.. Its function is as follows. Hydrolyzes a variety of proteins. The sequence is that of Gastricsin (PGC) from Sus scrofa (Pig).